The sequence spans 84 residues: Cytochrome b559 subunit alpha (84 aa).

Residues 21–35 (VIHSITIPSLFIAGW) traverse the membrane as a helical segment. His23 is a heme binding site.

This sequence belongs to the PsbE/PsbF family. In terms of assembly, heterodimer of an alpha subunit and a beta subunit. PSII is composed of 1 copy each of membrane proteins PsbA, PsbB, PsbC, PsbD, PsbE, PsbF, PsbH, PsbI, PsbJ, PsbK, PsbL, PsbM, PsbT, PsbX, PsbY, PsbZ, Psb30/Ycf12, at least 3 peripheral proteins of the oxygen-evolving complex and a large number of cofactors. It forms dimeric complexes. Requires heme b as cofactor.

The protein resides in the plastid membrane. Functionally, this b-type cytochrome is tightly associated with the reaction center of photosystem II (PSII). PSII is a light-driven water:plastoquinone oxidoreductase that uses light energy to abstract electrons from H(2)O, generating O(2) and a proton gradient subsequently used for ATP formation. It consists of a core antenna complex that captures photons, and an electron transfer chain that converts photonic excitation into a charge separation. The protein is Cytochrome b559 subunit alpha of Cuscuta gronovii (Common dodder).